Reading from the N-terminus, the 938-residue chain is Protocadherin gamma-C4 (938 aa).

The N-terminal stretch at 1–29 is a signal peptide; the sequence is MLRKVRSWTEIWRWATLLFLFYHLGYVCG. Cadherin domains lie at 30 to 133, 134 to 242, 243 to 350, 351 to 455, 456 to 565, and 572 to 676; these read QIRY…APRF, PRQQ…APAF, QQSS…APYI, TVTS…PPSF, FQRS…APAV, and PGSL…VPDL. The Extracellular segment spans residues 30-692; it reads QIRYPVPEES…REGESRLTLY (663 aa). 3 N-linked (GlcNAc...) asparagine glycosylation sites follow: Asn265, Asn276, and Asn444. The chain crosses the membrane as a helical span at residues 693–713; it reads LAVSLVAICFVSFGSFVALLS. Residues 714-938 are Cytoplasmic-facing; it reads KCLRGAACGV…KKKSGKKEKK (225 aa). Disordered stretches follow at residues 791 to 847 and 908 to 938; these read PSAP…WPNN and ATLTNAAGKRDGKAPAGGNGNKKKSGKKEKK. The span at 822-847 shows a compositional bias: polar residues; the sequence is WRFSQAQRPGTSGSQNGDDTGTWPNN. Positions 928-938 are enriched in basic residues; sequence NKKKSGKKEKK.

It is found in the cell membrane. Its function is as follows. Potential calcium-dependent cell-adhesion protein. May be involved in the establishment and maintenance of specific neuronal connections in the brain. This chain is Protocadherin gamma-C4 (PCDHGC4), found in Homo sapiens (Human).